The chain runs to 469 residues: GDNF family receptor alpha-1 (469 aa).

Residues 1–27 form the signal peptide; sequence MFLALLYLALPLADVLLSAEVSGLPGG. Tandem repeats lie at residues 28-116, 149-237, and 238-341. The cysteines at positions 39 and 45 are disulfide-linked. N-linked (GlcNAc...) asparagine glycans are attached at residues Asn-62 and Asn-163. Intrachain disulfides connect Cys-153–Cys-213, Cys-160–Cys-166, Cys-177–Cys-191, Cys-186–Cys-232, Cys-215–Cys-220, Cys-242–Cys-312, Cys-249–Cys-255, Cys-266–Cys-284, Cys-276–Cys-336, and Cys-314–Cys-324. Residues Asn-346 and Asn-405 are each glycosylated (N-linked (GlcNAc...) asparagine). A lipid anchor (GPI-anchor amidated serine) is attached at Ser-430. Positions 431 to 469 are cleaved as a propeptide — removed in mature form; sequence HISSENSFALPTSFYPSTPLILMTIALSLFLFLSSSVVL.

It belongs to the GDNFR family. Interacts with GDNF ligand and RET: forms a 2:2:2 ternary complex composed of GDNF ligand, GFRA1 and RET receptor.

It is found in the cell membrane. The protein localises to the golgi apparatus. Its subcellular location is the trans-Golgi network. It localises to the endosome. The protein resides in the multivesicular body. In terms of biological role, coreceptor for GDNF, a neurotrophic factor that enhances survival and morphological differentiation of dopaminergic neurons and increases their high-affinity dopamine uptake. GDNF-binding leads to autophosphorylation and activation of the RET receptor. This chain is GDNF family receptor alpha-1 (GFRA1), found in Gallus gallus (Chicken).